The primary structure comprises 447 residues: Thiol-specific monooxygenase (447 aa).

Residues 13–17, E38, 46–47, 91–92, and 137–138 contribute to the FAD site; these read GAGPS, VW, NT, and DV. 90 to 91 provides a ligand contact to NADP(+); sequence TN. 223 to 226 serves as a coordination point for NADP(+); it reads SAND.

Belongs to the FMO family. As to quaternary structure, monomer. It depends on FAD as a cofactor.

Functionally, flavin-dependent oxidation of thiol-containing compounds. Probably required for the correct folding of disulfide-bonded proteins. In Schizosaccharomyces pombe (strain 972 / ATCC 24843) (Fission yeast), this protein is Thiol-specific monooxygenase (fmo1).